The sequence spans 722 residues: Protein Aster-A (722 aa).

A disordered region spans residues 1 to 62 (MFDTTPHSGR…KSGVSGTLST (62 aa)). Over residues 8 to 18 (SGRSSPSSSPS) the composition is skewed to low complexity. One can recognise a GRAM domain in the interval 93-160 (EDFRKLFSKL…KEVTCLKKEK (68 aa)). The interval 256–336 (ISPSGAADHS…DGPTSSLGPL (81 aa)) is disordered. Phosphoserine occurs at positions 265, 269, 273, and 417. In terms of domain architecture, VASt spans 369-540 (SGRLLINSVF…ELAKAEKLSL (172 aa)). Residues 561–600 (LSWRGHRDGPQHPDPDPCTQTSMHTSGSLSSRFSEPSVDQ) are disordered. The span at 565–575 (GHRDGPQHPDP) shows a compositional bias: basic and acidic residues. Residues 578-594 (CTQTSMHTSGSLSSRFS) show a composition bias toward polar residues. The chain crosses the membrane as a helical span at residues 609–629 (ALVLISIVLIVLIALNALLFY).

As to expression, highly expressed in the brain.

Its subcellular location is the endoplasmic reticulum membrane. The protein resides in the cell membrane. It is found in the cytoplasmic vesicle. It localises to the autophagosome. Cholesterol transporter that mediates non-vesicular transport of cholesterol from the plasma membrane (PM) to the endoplasmic reticulum (ER). Contains unique domains for binding cholesterol and the PM, thereby serving as a molecular bridge for the transfer of cholesterol from the PM to the ER. Plays a crucial role in cholesterol homeostasis and has the unique ability to localize to the PM based on the level of membrane cholesterol. In lipid-poor conditions localizes to the ER membrane and in response to excess cholesterol in the PM is recruited to the endoplasmic reticulum-plasma membrane contact sites (EPCS) which is mediated by the GRAM domain. At the EPCS, the sterol-binding VASt/ASTER domain binds to the cholesterol in the PM and facilitates its transfer from the PM to ER. May play a role in tumor progression. Plays a role in autophagy regulation and is required for biogenesis of the autophagosome. This function in autophagy requires its cholesterol-transfer activity. The protein is Protein Aster-A of Mus musculus (Mouse).